A 248-amino-acid polypeptide reads, in one-letter code: Mannose-binding protein C (248 aa).

An N-terminal signal peptide occupies residues 1 to 20; it reads MSLFPSLPLLLLSVVAASYS. Residues 42 to 99 enclose the Collagen-like domain; it reads GINGFPGKDGRDGTKGEKGEPGQGLRGLQGPPGKLGPPGNPGPSGSPGPKGQKGDPGK. The interval 43–111 is disordered; the sequence is INGFPGKDGR…DCDSSLAASE (69 aa). Residue P47 is modified to 4-hydroxyproline. Over residues 49–61 the composition is skewed to basic and acidic residues; sequence KDGRDGTKGEKGE. A 4-hydroxyproline mark is found at P73, P79, P82, and P88. Residues 75–87 are compositionally biased toward pro residues; the sequence is KLGPPGNPGPSGS. Positions 93-102 are enriched in basic and acidic residues; that stretch reads QKGDPGKSPD. A coiled-coil region spans residues 112-130; the sequence is RKALQTEMARIKKWLTFSL. The C-type lectin domain maps to 134–245; the sequence is VGNKFFLTNG…CSSSHLAVCE (112 aa). 2 cysteine pairs are disulfide-bonded: C155–C244 and C222–C236.

As to quaternary structure, oligomeric complex of 3 or more homotrimers. Interacts with MASP1 and MASP2. Interacts with MEP1A and MEP1B and may inhibit their catalytic activity. Post-translationally, hydroxylation on proline residues within the sequence motif, GXPG, is most likely to be 4-hydroxy as this fits the requirement for 4-hydroxylation in vertebrates.

The protein resides in the secreted. Its function is as follows. Calcium-dependent lectin involved in innate immune defense. Binds mannose, fucose and N-acetylglucosamine on different microorganisms and activates the lectin complement pathway. Binds to late apoptotic cells, as well as to apoptotic blebs and to necrotic cells, but not to early apoptotic cells, facilitating their uptake by macrophages. In Pongo pygmaeus (Bornean orangutan), this protein is Mannose-binding protein C (MBL2).